The sequence spans 238 residues: 6-phosphogluconolactonase (238 aa).

It belongs to the glucosamine/galactosamine-6-phosphate isomerase family. 6-phosphogluconolactonase subfamily.

The enzyme catalyses 6-phospho-D-glucono-1,5-lactone + H2O = 6-phospho-D-gluconate + H(+). The protein operates within carbohydrate degradation; pentose phosphate pathway; D-ribulose 5-phosphate from D-glucose 6-phosphate (oxidative stage): step 2/3. In terms of biological role, hydrolysis of 6-phosphogluconolactone to 6-phosphogluconate. The chain is 6-phosphogluconolactonase (pgl) from Pseudomonas aeruginosa (strain ATCC 15692 / DSM 22644 / CIP 104116 / JCM 14847 / LMG 12228 / 1C / PRS 101 / PAO1).